Here is a 257-residue protein sequence, read N- to C-terminus: Acetylglutamate kinase (257 aa).

Substrate is bound by residues 43–44, Arg-65, and Asn-157; that span reads GG. Residues 180–185 and 208–210 each bind ATP; these read DVSGIL and IIT.

This sequence belongs to the acetylglutamate kinase family. ArgB subfamily. In terms of assembly, homodimer.

It localises to the cytoplasm. The catalysed reaction is N-acetyl-L-glutamate + ATP = N-acetyl-L-glutamyl 5-phosphate + ADP. It functions in the pathway amino-acid biosynthesis; L-arginine biosynthesis; N(2)-acetyl-L-ornithine from L-glutamate: step 2/4. Its function is as follows. Catalyzes the ATP-dependent phosphorylation of N-acetyl-L-glutamate. This Serratia proteamaculans (strain 568) protein is Acetylglutamate kinase.